Consider the following 206-residue polypeptide: Guanylate kinase (206 aa).

One can recognise a Guanylate kinase-like domain in the interval glycine 6–aspartate 185. Glycine 13–serine 20 is an ATP binding site.

It belongs to the guanylate kinase family.

The protein resides in the cytoplasm. The enzyme catalyses GMP + ATP = GDP + ADP. Essential for recycling GMP and indirectly, cGMP. The chain is Guanylate kinase from Sulfurimonas denitrificans (strain ATCC 33889 / DSM 1251) (Thiomicrospira denitrificans (strain ATCC 33889 / DSM 1251)).